A 438-amino-acid chain; its full sequence is Glutaryl-CoA dehydrogenase, mitochondrial (438 aa).

The N-terminal 44 residues, 1 to 44 (MALRGVSVQLLSRVPGLRVFRTWVSSAAQTEKVGRTQSQLAKSS), are a transit peptide targeting the mitochondrion. Residues 138–139 (RS) and Ser186 each bind substrate. Residues 177-186 (FGLTEPNSGS), Ser186, and 212-214 (WIT) contribute to the FAD site. Position 240 is an N6-acetyllysine (Lys240). Substrate is bound at residue 287-294 (FGCLNNGR). FAD is bound by residues Arg319, Gln330, and 387–391 (DMLGG). The active-site Proton acceptor is Glu414. Gly415 serves as a coordination point for substrate. FAD contacts are provided by residues Thr416, 416 to 418 (THD), and Phe434.

The protein belongs to the acyl-CoA dehydrogenase family. In terms of assembly, homotetramer. The cofactor is FAD.

The protein resides in the mitochondrion matrix. The catalysed reaction is glutaryl-CoA + oxidized [electron-transfer flavoprotein] + 2 H(+) = (2E)-butenoyl-CoA + reduced [electron-transfer flavoprotein] + CO2. The protein operates within amino-acid metabolism; lysine degradation. It functions in the pathway amino-acid metabolism; tryptophan metabolism. Functionally, catalyzes the oxidative decarboxylation of glutaryl-CoA to crotonyl-CoA and CO(2) in the degradative pathway of L-lysine, L-hydroxylysine, and L-tryptophan metabolism. It uses electron transfer flavoprotein as its electron acceptor. This Macaca fascicularis (Crab-eating macaque) protein is Glutaryl-CoA dehydrogenase, mitochondrial (GCDH).